The chain runs to 442 residues: tRNA-2-methylthio-N(6)-dimethylallyladenosine synthase (442 aa).

The region spanning 6–122 is the MTTase N-terminal domain; the sequence is RKFYIHTFGC…LPALIAEAGD (117 aa). 6 residues coordinate [4Fe-4S] cluster: C15, C51, C85, C157, C161, and C164. The 231-residue stretch at 143-373 folds into the Radical SAM core domain; it reads RTQSLNAFVP…IDLQNGISAE (231 aa). Positions 376 to 439 constitute a TRAM domain; that stretch reads GLAPGSVVEV…SATLFGQSAE (64 aa).

The protein belongs to the methylthiotransferase family. MiaB subfamily. Monomer. Requires [4Fe-4S] cluster as cofactor.

It is found in the cytoplasm. The enzyme catalyses N(6)-dimethylallyladenosine(37) in tRNA + (sulfur carrier)-SH + AH2 + 2 S-adenosyl-L-methionine = 2-methylsulfanyl-N(6)-dimethylallyladenosine(37) in tRNA + (sulfur carrier)-H + 5'-deoxyadenosine + L-methionine + A + S-adenosyl-L-homocysteine + 2 H(+). Functionally, catalyzes the methylthiolation of N6-(dimethylallyl)adenosine (i(6)A), leading to the formation of 2-methylthio-N6-(dimethylallyl)adenosine (ms(2)i(6)A) at position 37 in tRNAs that read codons beginning with uridine. In Chlorobium phaeobacteroides (strain DSM 266 / SMG 266 / 2430), this protein is tRNA-2-methylthio-N(6)-dimethylallyladenosine synthase.